A 188-amino-acid chain; its full sequence is UPF0340 protein GK3370 (188 aa).

This sequence belongs to the UPF0340 family.

The polypeptide is UPF0340 protein GK3370 (Geobacillus kaustophilus (strain HTA426)).